Here is a 33-residue protein sequence, read N- to C-terminus: QLGPQVPAHLRTDLSKKQGPWAEEEAAYGWMDF.

Residue Gln1 is modified to Pyrrolidone carboxylic acid. Phe33 carries the phenylalanine amide modification.

This sequence belongs to the gastrin/cholecystokinin family.

The protein resides in the secreted. In terms of biological role, gastrin stimulates the stomach mucosa to produce and secrete hydrochloric acid and the pancreas to secrete its digestive enzymes. It also stimulates smooth muscle contraction and increases blood circulation and water secretion in the stomach and intestine. This chain is Gastrin (GAST), found in Cavia porcellus (Guinea pig).